A 943-amino-acid chain; its full sequence is Protein translocase subunit SecA (943 aa).

ATP contacts are provided by residues glutamine 90, 108 to 112 (GEGKT), and aspartate 509. The disordered stretch occupies residues 535-560 (PNNEHKPPIPKQRSSKSKGGFSSKVG). The span at 551-560 (SKGGFSSKVG) shows a compositional bias: low complexity.

It belongs to the SecA family. In terms of assembly, monomer and homodimer. Part of the essential Sec protein translocation apparatus which comprises SecA, SecYEG and auxiliary proteins SecDF. Other proteins may also be involved.

Its subcellular location is the cell inner membrane. The protein resides in the cellular thylakoid membrane. It localises to the cytoplasm. The enzyme catalyses ATP + H2O + cellular proteinSide 1 = ADP + phosphate + cellular proteinSide 2.. In terms of biological role, part of the Sec protein translocase complex. Interacts with the SecYEG preprotein conducting channel. Has a central role in coupling the hydrolysis of ATP to the transfer of proteins into and across the cell membrane, serving as an ATP-driven molecular motor driving the stepwise translocation of polypeptide chains across the membrane. Probably participates in protein translocation into and across both the cytoplasmic and thylakoid membranes in cyanobacterial cells. In Prochlorococcus marinus (strain MIT 9312), this protein is Protein translocase subunit SecA.